The primary structure comprises 465 residues: tRNA modification GTPase MnmE (465 aa).

3 residues coordinate (6S)-5-formyl-5,6,7,8-tetrahydrofolate: Arg-30, Glu-92, and Arg-132. The TrmE-type G domain occupies 227 to 388 (GLQVALVGRP…LIEAVLKTCG (162 aa)). Asn-237 lines the K(+) pocket. GTP is bound by residues 237 to 242 (NVGKSS), 256 to 262 (TDLPGTT), 281 to 284 (DTAG), and 342 to 345 (NKAD). Position 241 (Ser-241) interacts with Mg(2+). 3 residues coordinate K(+): Thr-256, Leu-258, and Thr-261. Residue Thr-262 participates in Mg(2+) binding. Residue Lys-465 coordinates (6S)-5-formyl-5,6,7,8-tetrahydrofolate.

Belongs to the TRAFAC class TrmE-Era-EngA-EngB-Septin-like GTPase superfamily. TrmE GTPase family. As to quaternary structure, homodimer. Heterotetramer of two MnmE and two MnmG subunits. K(+) serves as cofactor.

The protein resides in the cytoplasm. In terms of biological role, exhibits a very high intrinsic GTPase hydrolysis rate. Involved in the addition of a carboxymethylaminomethyl (cmnm) group at the wobble position (U34) of certain tRNAs, forming tRNA-cmnm(5)s(2)U34. This chain is tRNA modification GTPase MnmE, found in Prochlorococcus marinus (strain MIT 9303).